A 306-amino-acid chain; its full sequence is Ribonuclease Z (306 aa).

His-63, His-65, Asp-67, His-68, His-141, Asp-211, and His-269 together coordinate Zn(2+). The Proton acceptor role is filled by Asp-67.

Belongs to the RNase Z family. In terms of assembly, homodimer. The cofactor is Zn(2+).

It carries out the reaction Endonucleolytic cleavage of RNA, removing extra 3' nucleotides from tRNA precursor, generating 3' termini of tRNAs. A 3'-hydroxy group is left at the tRNA terminus and a 5'-phosphoryl group is left at the trailer molecule.. Functionally, zinc phosphodiesterase, which displays some tRNA 3'-processing endonuclease activity. Probably involved in tRNA maturation, by removing a 3'-trailer from precursor tRNA. The chain is Ribonuclease Z from Staphylococcus saprophyticus subsp. saprophyticus (strain ATCC 15305 / DSM 20229 / NCIMB 8711 / NCTC 7292 / S-41).